The chain runs to 393 residues: Short chain dehydrogenase sirQ (393 aa).

Leu-54 lines the NADP(+) pocket. Ser-233 (proton donor) is an active-site residue. Lys-259 functions as the Lowers pKa of active site Tyr in the catalytic mechanism. Residue Ala-286 coordinates NADP(+).

It belongs to the short-chain dehydrogenases/reductases (SDR) family. Highly divergent.

It participates in mycotoxin biosynthesis. Its function is as follows. Short chain dehydrogenase; part of the gene cluster that mediates the biosynthesis of sirodesmin PL, an epipolythiodioxopiperazine (ETP) characterized by a disulfide bridged cyclic dipeptide and that acts as a phytotoxin which is involved in the blackleg didease of canola. SirD catalyzes the O-prenylation of L-tyrosine (L-Tyr) in the presence of dimethylallyl diphosphate (DMAPP) to yield 4-O-dimethylallyl-L-Tyr, and therefore represents probably the first pathway-specific enzyme in the biosynthesis of sirodesmin PL. 4-O-dimethylallyl-L-Tyr, then undergoes condensation with L-Ser in a reaction catalyzed by the non-ribosomal peptide synthase sirP to form the diketopiperazine (DKP) backbone. Further bishydroxylation of the DKP performed by the cytochrome P450 monooxygenase sirC leads to the production of the intermediate phomamide. This step is essential to form the reactive thiol group required for toxicity of sirodesmin PL. The next steps of sirodesmin biosynthesis are not well understood yet, but some predictions could be made from intermediate compounds identification. Phomamide is converted into phomalizarine via oxidation, probably by sirT. Further oxidation, methylation (by sirM or sirN) and reduction steps convert phomalizarine to deacetyl sirodesmin. Finally, acetyltransferase sirH probably acetylates deacetyl sirodesmin to produce sirodesmin PL. The polypeptide is Short chain dehydrogenase sirQ (Leptosphaeria maculans (Blackleg fungus)).